The chain runs to 291 residues: N-acetylmannosamine kinase (291 aa).

Residues 5–12 (AIDIGGTK) and 132–139 (GVGGGVVC) each bind ATP. Zn(2+) contacts are provided by H156, C166, C168, and C173.

The protein belongs to the ROK (NagC/XylR) family. NanK subfamily. As to quaternary structure, homodimer.

It catalyses the reaction an N-acyl-D-mannosamine + ATP = an N-acyl-D-mannosamine 6-phosphate + ADP + H(+). It functions in the pathway amino-sugar metabolism; N-acetylneuraminate degradation; D-fructose 6-phosphate from N-acetylneuraminate: step 2/5. In terms of biological role, catalyzes the phosphorylation of N-acetylmannosamine (ManNAc) to ManNAc-6-P. The chain is N-acetylmannosamine kinase from Salmonella arizonae (strain ATCC BAA-731 / CDC346-86 / RSK2980).